Reading from the N-terminus, the 430-residue chain is MIDGKTANEIFDSIRQHIIAGTLRAEDSLPPVRELASELKVNRNTVAAAYKRLITAGLAQSLGRNGTVIKGSPSPVALEGGDPHTPLHDLSGGNPDPQRLPDLSRYFARLSRTPHLYGDAPVSPELHAWAARWLRDATPVAGEIDITSGAIDAIERLLCAHLLPGDSVAVEDPCFLSSINMLRYAGFSASPVSVDSEGMQPEKLERALNQGARAVILTPRAHNPTGCSLSARRAAALQNMLARYPQVVVIIDDHFALLSSSPWQPVIAQTTQHWAVIRSVSKTLGPDLRLAIVASDSATSAKLRLRLNAGSQWVSHLLQDLVYACLTDPEYQHRLTQTRLFYAARQQKLARALQQYGIAISPGDGVNAWLPLDTHSQATAFTLAKSGWLVREGEAFGVSAPSHGLRITLSTLNDSEINTLAADIHQALNR.

Residues 4–72 (GKTANEIFDS…GRNGTVIKGS (69 aa)) form the HTH gntR-type domain. A DNA-binding region (H-T-H motif) is located at residues 32 to 51 (VRELASELKVNRNTVAAAYK). The segment at 70–95 (KGSPSPVALEGGDPHTPLHDLSGGNP) is disordered. Residue Lys-282 is modified to N6-(pyridoxal phosphate)lysine.

This sequence in the C-terminal section; belongs to the class-I pyridoxal-phosphate-dependent aminotransferase family. In terms of assembly, homodimer in both apo- and holo-forms.

Functionally, acts as a transcriptional repressor of the pdxK gene, encoding a pyridoxal kinase involved in the vitamin B6 salvage pathway. Also represses transcription of its own gene. Binds to the ptsJ-pdxK intergenic region, but does not bind pdxY and pdxH promoters. Among all six B6 vitamers, only pyridoxal 5'-phosphate (PLP) clearly binds to the protein and acts as an effector molecule for PtsJ, inducing a protein conformational change that increases affinity for DNA. Thus, PLP stabilizes protein-DNA interactions, reinforcing repression. The chain is Vitamin B6 salvage pathway transcriptional repressor PtsJ from Salmonella typhimurium (strain LT2 / SGSC1412 / ATCC 700720).